Consider the following 166-residue polypeptide: MALGLEDKKAIVAEVNEAAKGALSAVVADSRGVTVDKMTVLRKTAREAGVYMRVVRNTLLRRAVEGTEFACLNDVLTGPTLIAFSNEHPGAAARLFKEFAKANQKFEIKAGAFNGEFIAAAQIDRLATLPTYDEAIAKLMATMKEASAGKLVRTIAAVRDQKQAAA.

This sequence belongs to the universal ribosomal protein uL10 family. As to quaternary structure, part of the ribosomal stalk of the 50S ribosomal subunit. The N-terminus interacts with L11 and the large rRNA to form the base of the stalk. The C-terminus forms an elongated spine to which L12 dimers bind in a sequential fashion forming a multimeric L10(L12)X complex.

In terms of biological role, forms part of the ribosomal stalk, playing a central role in the interaction of the ribosome with GTP-bound translation factors. In Aeromonas salmonicida (strain A449), this protein is Large ribosomal subunit protein uL10.